The sequence spans 517 residues: Putative alpha-L-fucosidase 1 (517 aa).

The N-terminal stretch at 1-20 (MATILLLLLGLLVGLPLLRA) is a signal peptide. N-linked (GlcNAc...) asparagine glycosylation is found at Asn-119, Asn-249, Asn-296, Asn-321, Asn-352, Asn-496, and Asn-511.

It belongs to the glycosyl hydrolase 29 family.

It localises to the secreted. The protein localises to the extracellular space. Its subcellular location is the apoplast. The catalysed reaction is an alpha-L-fucoside + H2O = L-fucose + an alcohol. Its function is as follows. Alpha-L-fucosidase is responsible for hydrolyzing the alpha-1,6-linked fucose joined to the reducing-end N-acetylglucosamine of the carbohydrate moieties of glycoproteins. Active only against 2'-fucosyl-lactitol when heterologously expressed. This Oryza sativa subsp. japonica (Rice) protein is Putative alpha-L-fucosidase 1.